A 211-amino-acid chain; its full sequence is Metalloproteinase inhibitor 3 (211 aa).

Residues 1–23 (MTPWLGLVVLLGSWSLGDWGAEA) form the signal peptide. Residue Cys-24 coordinates Zn(2+). Involved in metalloproteinase-binding regions lie at residues 24–27 (CTCS) and 88–89 (ES). Cystine bridges form between Cys-24-Cys-91, Cys-26-Cys-118, Cys-36-Cys-143, Cys-145-Cys-192, Cys-150-Cys-155, and Cys-163-Cys-184. An NTR domain is found at 24-143 (CTCSPSHPQD…GLNYRYHLGC (120 aa)). A mediates interaction with EFEMP1 region spans residues 105–188 (TGRVYDGKMY…SKHYACIRQK (84 aa)). Asn-207 carries an N-linked (GlcNAc...) asparagine glycan.

It belongs to the protease inhibitor I35 (TIMP) family. In terms of assembly, interacts with EFEMP1. Interacts with KDR.

Its subcellular location is the secreted. It is found in the extracellular space. It localises to the extracellular matrix. Mediates a variety of processes including matrix regulation and turnover, inflammation, and angiogenesis, through reversible inhibition of zinc protease superfamily enzymes, primarily matrix metalloproteinases (MMPs). Regulates extracellular matrix (ECM) remodeling through inhibition of matrix metalloproteinases (MMP) including MMP-1, MMP-2, MMP-3, MMP-7, MMP-9, MMP-13, MMP-14 and MMP-15. Additionally, modulates the processing of amyloid precursor protein (APP) and apolipoprotein E receptor ApoER2 by inhibiting two alpha-secretases ADAM10 and ADAM17. Functions as a tumor suppressor and a potent inhibitor of angiogenesis. Exerts its anti-angiogenic effect by directly interacting with vascular endothelial growth factor (VEGF) receptor-2/KDR, preventing its binding to the VEGFA ligand. Selectively induces apoptosis in angiogenic endothelial cells through a caspase-independent cell death pathway. Mechanistically, inhibits matrix-induced focal adhesion kinase PTK2 tyrosine phosphorylation and association with paxillin/PXN and disrupts the incorporation of ITGB3, PTK2 and PXN into focal adhesion contacts on the matrix. This is Metalloproteinase inhibitor 3 (TIMP3) from Bos taurus (Bovine).